A 624-amino-acid polypeptide reads, in one-letter code: Anti-CBASS protein Acb1 (624 aa).

Tyrosine 106 is a binding site for 3',3'-cGAMP. Tyrosine 106 is a 3',3'-cUAMP binding site. Catalysis depends on residues histidine 503, threonine 505, histidine 581, and threonine 583. Tryptophan 617 is a binding site for 3',3'-cGAMP. Position 617 (tryptophan 617) interacts with 3',3'-cUAMP.

The protein belongs to the anti-CBASS protein Acb1 family.

The enzyme catalyses 3',3'-cUAMP + H2O = U[3'-5']pAp[3'] + H(+). It catalyses the reaction 3',3',3'-c-tri-AMP + H2O = A[3'-5']pA[3'-5']pAp[3'] + H(+). The catalysed reaction is 3',3',3'-cAAG + H2O = G[3'-5']pA[3'-5']pAp[3'] + H(+). It carries out the reaction 3',3',3'-cAAG + H2O = A[3'-5']pG[3'-5']pAp[3'] + H(+). The enzyme catalyses 3',3'-cGAMP + H2O = G[3'-5']pAp[3'] + H(+). Counteracts or regulates the endogenous CBASS antiviral defense system. Phosphodiesterase that enables metal-independent hydrolysis of the host cyclic di- and trinucleotide CBASS signals such as 3'3'-cGAMP, 3'3'cUA, and 3'3'3'-cAAA. This chain is Anti-CBASS protein Acb1, found in Sphingomonas paeninsulae.